Reading from the N-terminus, the 376-residue chain is Tetraacyldisaccharide 4'-kinase (376 aa).

Position 51–58 (51–58) interacts with ATP; sequence AVGGTGKT.

This sequence belongs to the LpxK family.

It catalyses the reaction a lipid A disaccharide + ATP = a lipid IVA + ADP + H(+). Its pathway is glycolipid biosynthesis; lipid IV(A) biosynthesis; lipid IV(A) from (3R)-3-hydroxytetradecanoyl-[acyl-carrier-protein] and UDP-N-acetyl-alpha-D-glucosamine: step 6/6. Functionally, transfers the gamma-phosphate of ATP to the 4'-position of a tetraacyldisaccharide 1-phosphate intermediate (termed DS-1-P) to form tetraacyldisaccharide 1,4'-bis-phosphate (lipid IVA). This chain is Tetraacyldisaccharide 4'-kinase, found in Bacteroides fragilis (strain ATCC 25285 / DSM 2151 / CCUG 4856 / JCM 11019 / LMG 10263 / NCTC 9343 / Onslow / VPI 2553 / EN-2).